We begin with the raw amino-acid sequence, 337 residues long: Mannan polymerase complex subunit mnn9 (337 aa).

Topologically, residues 1–8 are cytoplasmic; sequence MRVYNKSR. The chain crosses the membrane as a helical; Signal-anchor for type II membrane protein span at residues 9-29; sequence IVGQLLFVALGITFIYYLFTP. Residues 30–337 are Lumenal-facing; the sequence is SVNSNAKVQI…PYYLVFHHNE (308 aa).

Belongs to the ANP1/MMN9/VAN1 family.

It is found in the endoplasmic reticulum membrane. The protein localises to the golgi apparatus membrane. Its pathway is protein modification; protein glycosylation. Its function is as follows. Required for the addition of the long alpha 1,6-mannose backbone of N-linked glycans on cell wall and periplasmic proteins. The sequence is that of Mannan polymerase complex subunit mnn9 from Schizosaccharomyces pombe (strain 972 / ATCC 24843) (Fission yeast).